The chain runs to 132 residues: Small ribosomal subunit protein uS8c (132 aa).

Belongs to the universal ribosomal protein uS8 family. Part of the 30S ribosomal subunit.

It is found in the plastid. It localises to the chloroplast. One of the primary rRNA binding proteins, it binds directly to 16S rRNA central domain where it helps coordinate assembly of the platform of the 30S subunit. The polypeptide is Small ribosomal subunit protein uS8c (rps8) (Angiopteris evecta (Mule's foot fern)).